The sequence spans 87 residues: Putative sodium channel toxin Ts40 (87 aa).

A signal peptide spans Met-1–Gln-19. 3 disulfide bridges follow: Cys-41/Cys-63, Cys-47/Cys-68, and Cys-51/Cys-70.

This sequence belongs to the long (4 C-C) scorpion toxin superfamily. Sodium channel inhibitor family. Expressed by the venom gland.

Its subcellular location is the secreted. Putative sodium channel toxin. This chain is Putative sodium channel toxin Ts40, found in Tityus serrulatus (Brazilian scorpion).